A 518-amino-acid polypeptide reads, in one-letter code: OTU domain-containing protein 5 (518 aa).

Disordered regions lie at residues 1 to 79 (MTIL…SGGA) and 105 to 144 (PGHS…ETAA). Positions 39-53 (SSPPPRWAYPGNPAP) are enriched in pro residues. Low complexity predominate over residues 116–125 (SAGPGAPGSS). Positions 171-294 (FIIKQMKEDG…NIHYNSVVNP (124 aa)) constitute an OTU domain. The tract at residues 176–182 (MKEDGAC) is cys-loop. Residue Asp179 is part of the active site. Cys182 functions as the Nucleophile in the catalytic mechanism. The segment at 231 to 241 (KRKNNCHGNHI) is variable-loop. The his-loop stretch occupies residues 282 to 287 (YHRNIH). Residue His287 is part of the active site. Residues 371–450 (ARQPRKASAT…GPSNQTCAGA (80 aa)) are disordered. A compositionally biased stretch (low complexity) spans 377–390 (ASATCSSATAAASS).

This sequence belongs to the peptidase C85 family.

It carries out the reaction Thiol-dependent hydrolysis of ester, thioester, amide, peptide and isopeptide bonds formed by the C-terminal Gly of ubiquitin (a 76-residue protein attached to proteins as an intracellular targeting signal).. In terms of biological role, deubiquitinating enzyme that may function as negative regulator of the innate immune system. Has peptidase activity towards 'Lys-48'- and 'Lys-63'-linked polyubiquitin chains. Can also cleave 'Lys-11'-linked ubiquitin chains (in vitro). The chain is OTU domain-containing protein 5 (otud5) from Xenopus tropicalis (Western clawed frog).